Consider the following 475-residue polypeptide: Probable proline--tRNA ligase, mitochondrial (475 aa).

The transit peptide at 1-29 (MEGLLTRCRTLSALAACSLRHCRYIIHKC) directs the protein to the mitochondrion.

It belongs to the class-II aminoacyl-tRNA synthetase family.

Its subcellular location is the mitochondrion matrix. The enzyme catalyses tRNA(Pro) + L-proline + ATP = L-prolyl-tRNA(Pro) + AMP + diphosphate. Mitochondrial aminoacyl-tRNA synthetase that catalyzes the specific attachment of the proline amino acid (aa) to the homologous transfer RNA (tRNA), further participating in protein synthesis. The reaction occurs in a two steps: proline is first activated by ATP to form Pro-AMP and then transferred to the acceptor end of tRNA(Pro). The chain is Probable proline--tRNA ligase, mitochondrial (Pars2) from Mus musculus (Mouse).